A 218-amino-acid polypeptide reads, in one-letter code: RNA polymerase sigma-H factor (218 aa).

A Polymerase core binding motif is present at residues 62–75; the sequence is DIVQEGMIGLYKSI. Positions 182-201 form a DNA-binding region, H-T-H motif; sequence YQEISDELNRHVKSIDNALQ.

Belongs to the sigma-70 factor family. As to quaternary structure, interacts transiently with the RNAP core.

Its function is as follows. Sigma factors are initiation factors that promote the attachment of RNA polymerase (RNAP) to specific initiation sites and are then released. This sigma factor is involved in the transition to post-exponential phase in the beginning of sporulation. It is also required for transcription of several stationary phase genes. Association with the RNAP core increases rapidly in early exponential phase, and reamins constant expression level after. The polypeptide is RNA polymerase sigma-H factor (sigH) (Bacillus subtilis (strain 168)).